A 471-amino-acid chain; its full sequence is Probable lysophospholipase BODYGUARD 2 (471 aa).

The N-terminal stretch at 1–45 (MGIARWLNRTVGFFVFALLDIADFLLCYTYKTLDYFLESERKPCY) is a signal peptide. The N-palmitoyl cysteine moiety is linked to residue Cys-46. The 104-residue stretch at 193-296 (VVFIHGFVSS…AIKSLTLLAP (104 aa)) folds into the AB hydrolase-1 domain. The active site involves His-197. Ser-271 (nucleophile) is an active-site residue. Active-site charge relay system residues include Asp-418 and His-446.

The protein resides in the cell membrane. Its subcellular location is the secreted. The protein localises to the cell wall. Its function is as follows. Involved in cuticle development and morphogenesis. This Arabidopsis thaliana (Mouse-ear cress) protein is Probable lysophospholipase BODYGUARD 2.